Reading from the N-terminus, the 493-residue chain is Cardiolipin synthase 1 (493 aa).

2 consecutive transmembrane segments (helical) span residues 13–33 (FTIILAIGFIINLVLAFIIIF) and 45–65 (WAWLFVLFVLPLIGFILYLFF). 2 consecutive PLD phosphodiesterase domains span residues 228-255 (MNNRNHRKIIIIDGQLGYVGGFNIGDEY) and 406-433 (ENGFIHSKMCLIDDEIVSVGTANMDFRS). Residues His-233, Lys-235, Asp-240, His-411, Lys-413, and Asp-418 contribute to the active site.

The protein belongs to the phospholipase D family. Cardiolipin synthase subfamily.

The protein localises to the cell membrane. It catalyses the reaction 2 a 1,2-diacyl-sn-glycero-3-phospho-(1'-sn-glycerol) = a cardiolipin + glycerol. Catalyzes the reversible phosphatidyl group transfer from one phosphatidylglycerol molecule to another to form cardiolipin (CL) (diphosphatidylglycerol) and glycerol. This Staphylococcus aureus (strain MRSA252) protein is Cardiolipin synthase 1 (cls1).